The sequence spans 440 residues: Ferreportin (440 aa).

The Cytoplasmic portion of the chain corresponds to M1–R8. Residues I9–I38 traverse the membrane as a helical segment. D24 contributes to the Ca(2+) binding site. At F39–K42 the chain is on the extracellular side. The helical transmembrane segment at L43–D69 threads the bilayer. Residues T70–P72 lie on the Cytoplasmic side of the membrane. The helical transmembrane segment at R73–R103 threads the bilayer. Position 84 (Q84) interacts with Ca(2+). Topologically, residues A104–S109 are extracellular. A helical membrane pass occupies residues W110–L145. At V146–A147 the chain is on the cytoplasmic side. A helical transmembrane segment spans residues P148–L176. Topologically, residues F177–L186 are extracellular. Residues A187–R213 traverse the membrane as a helical segment. The Ca(2+) site is built by N196 and E203. Over S214 to P242 the chain is Cytoplasmic. Residues I243–D271 form a helical membrane-spanning segment. At E272–P276 the chain is on the extracellular side. A helical membrane pass occupies residues E277–R304. Residues L305 to G306 lie on the Cytoplasmic side of the membrane. Residues L307–F329 form a helical membrane-spanning segment. The Extracellular portion of the chain corresponds to A330–A335. Residues S336–L365 traverse the membrane as a helical segment. At I366–R370 the chain is on the cytoplasmic side. A helical membrane pass occupies residues R371 to L395. Over L396–Q398 the chain is Extracellular. The helical transmembrane segment at T399–S424 threads the bilayer. Residues S425 to S440 are Cytoplasmic-facing.

Belongs to the ferroportin (FP) (TC 2.A.100) family. The cofactor is Ca(2+).

Its subcellular location is the cell membrane. Functionally, iron transpoter that exports Fe(2+) from the cell. Also binds to Co(2+) and Ni(2+). May act as a multivalent divalent metal transporter. The transporter is composed of 12 transmembrane (TM) helices organized into N-terminal (TM1-6) and C-terminal (TM7-12) domains. The substrate-binding site is formed at the interface of the two domains and is alternately accessible from either side of the membrane. The transport cycle is viewed as a series of ligand-induced conformational changes that include open outward and open inward states. The polypeptide is Ferreportin (slc39) (Bdellovibrio bacteriovorus (strain ATCC 15356 / DSM 50701 / NCIMB 9529 / HD100)).